Here is a 279-residue protein sequence, read N- to C-terminus: Pantothenate synthetase (279 aa).

Residue 26–33 coordinates ATP; the sequence is MGNLHEGH. The active-site Proton donor is the His33. Gln57 is a binding site for (R)-pantoate. Gln57 provides a ligand contact to beta-alanine. Position 144–147 (144–147) interacts with ATP; the sequence is GKKD. (R)-pantoate is bound at residue Gln150. ATP-binding positions include Val173 and 181 to 184; that span reads LSSR.

This sequence belongs to the pantothenate synthetase family. As to quaternary structure, homodimer.

It is found in the cytoplasm. It carries out the reaction (R)-pantoate + beta-alanine + ATP = (R)-pantothenate + AMP + diphosphate + H(+). It participates in cofactor biosynthesis; (R)-pantothenate biosynthesis; (R)-pantothenate from (R)-pantoate and beta-alanine: step 1/1. Functionally, catalyzes the condensation of pantoate with beta-alanine in an ATP-dependent reaction via a pantoyl-adenylate intermediate. The protein is Pantothenate synthetase of Burkholderia thailandensis (strain ATCC 700388 / DSM 13276 / CCUG 48851 / CIP 106301 / E264).